The sequence spans 103 residues: Putative ribosomal RNA-processing protein 7 homolog B (103 aa).

Over residues 1 to 19 the composition is skewed to basic and acidic residues; sequence MEAYDQKIAEEEAKAKEEE. The interval 1-25 is disordered; that stretch reads MEAYDQKIAEEEAKAKEEEGVPDEE. Positions 71-100 form a coiled coil; that stretch reads ESKMEHLAQLRKKFEEDKQRIELLRAQRKF.

It belongs to the RRP7 family.

The polypeptide is Putative ribosomal RNA-processing protein 7 homolog B (Homo sapiens (Human)).